The chain runs to 505 residues: Endoglucanase 5 (505 aa).

The first 31 residues, 1 to 31, serve as a signal peptide directing secretion; that stretch reads MWMRRNQIVRKLTLGVVTTVLGMSLSFSALS. Positions 32–334 are catalytic; sequence ATPVETHGQL…REQIRAGANL (303 aa). Residues histidine 64, 68 to 69, tyrosine 95, and histidine 130 contribute to the substrate site; that span reads WF. Glutamate 168 acts as the Proton donor in catalysis. Tyrosine 230 contacts substrate. Glutamate 256 serves as the catalytic Nucleophile. Substrate-binding positions include 262–263, tryptophan 290, and 295–297; these read AS and KSE. Residues 332 to 355 form a disordered region; that stretch reads ANLGGGDTPTTPTEPTNPGNGTTG. Residues 335–352 are linker; that stretch reads GGGDTPTTPTEPTNPGNG. The segment covering 339–355 has biased composition (low complexity); it reads TPTTPTEPTNPGNGTTG. In terms of domain architecture, CBM3 spans 353–505; sequence TTGDVVLQYR…KGTLVWGVEP (153 aa).

It belongs to the glycosyl hydrolase 5 (cellulase A) family.

It is found in the secreted. The catalysed reaction is Endohydrolysis of (1-&gt;4)-beta-D-glucosidic linkages in cellulose, lichenin and cereal beta-D-glucans.. Its function is as follows. Endoglucanase with some exoglucanase activity. This Pectobacterium carotovorum subsp. carotovorum (Erwinia carotovora subsp. carotovora) protein is Endoglucanase 5 (celV).